Reading from the N-terminus, the 376-residue chain is Dual-specificity RNA methyltransferase RlmN (376 aa).

E96 (proton acceptor) is an active-site residue. In terms of domain architecture, Radical SAM core spans 102–341 (DEDRATLCVS…VVVRKTRGDD (240 aa)). A disulfide bond links C109 and C346. [4Fe-4S] cluster is bound by residues C116, C120, and C123. Residues 170–171 (GE), S202, 224–226 (SLH), and N303 contribute to the S-adenosyl-L-methionine site. The S-methylcysteine intermediate role is filled by C346.

The protein belongs to the radical SAM superfamily. RlmN family. [4Fe-4S] cluster serves as cofactor.

The protein resides in the cytoplasm. The catalysed reaction is adenosine(2503) in 23S rRNA + 2 reduced [2Fe-2S]-[ferredoxin] + 2 S-adenosyl-L-methionine = 2-methyladenosine(2503) in 23S rRNA + 5'-deoxyadenosine + L-methionine + 2 oxidized [2Fe-2S]-[ferredoxin] + S-adenosyl-L-homocysteine. It catalyses the reaction adenosine(37) in tRNA + 2 reduced [2Fe-2S]-[ferredoxin] + 2 S-adenosyl-L-methionine = 2-methyladenosine(37) in tRNA + 5'-deoxyadenosine + L-methionine + 2 oxidized [2Fe-2S]-[ferredoxin] + S-adenosyl-L-homocysteine. Its function is as follows. Specifically methylates position 2 of adenine 2503 in 23S rRNA and position 2 of adenine 37 in tRNAs. m2A2503 modification seems to play a crucial role in the proofreading step occurring at the peptidyl transferase center and thus would serve to optimize ribosomal fidelity. This is Dual-specificity RNA methyltransferase RlmN from Pseudoalteromonas atlantica (strain T6c / ATCC BAA-1087).